An 87-amino-acid polypeptide reads, in one-letter code: uncharacterized protein (87 aa).

Residues 13 to 33 traverse the membrane as a helical segment; sequence LMIVSAVFGGIGIITTIVFVI. Positions 66 to 87 are disordered; the sequence is EECGGSTETSSSKPKKKAKKEV. Basic residues predominate over residues 78-87; that stretch reads KPKKKAKKEV.

The protein resides in the membrane. This is an uncharacterized protein from Caenorhabditis elegans.